The primary structure comprises 299 residues: Probable lipid kinase YegS (299 aa).

Residues 2 to 133 (AEFPASLLIL…IDMAQVNKQT (132 aa)) enclose the DAGKc domain. Residues Thr-40, 66 to 72 (GDGTINE), and Thr-95 contribute to the ATP site. Positions 215, 218, and 220 each coordinate Mg(2+). Glu-271 acts as the Proton acceptor in catalysis.

This sequence belongs to the diacylglycerol/lipid kinase family. YegS lipid kinase subfamily. Mg(2+) serves as cofactor. The cofactor is Ca(2+).

Its subcellular location is the cytoplasm. In terms of biological role, probably phosphorylates lipids; the in vivo substrate is unknown. This is Probable lipid kinase YegS from Escherichia coli O9:H4 (strain HS).